Reading from the N-terminus, the 549-residue chain is Biotin-dependent acetyl-/propionyl-coenzyme A carboxylase beta5 subunit (549 aa).

In terms of domain architecture, CoA carboxyltransferase N-terminal spans 25-281; sequence TAGKLAELHK…NNFTDAPRYS (257 aa). The CoA carboxyltransferase C-terminal domain occupies 295–542; it reads AKDLELDTLI…ERKIAHLPPK (248 aa).

The protein belongs to the AccD/PCCB family. As to quaternary structure, the biotin-dependent acyl-CoA carboxylase complex is composed of AccA3, which contains the biotin carboxylase (BC) and biotin carboxyl carrier protein (BCCP) domains, and AccD5, which contains the carboxyl transferase (CT) domain.

It carries out the reaction N(6)-carboxybiotinyl-L-lysyl-[protein] + acetyl-CoA = N(6)-biotinyl-L-lysyl-[protein] + malonyl-CoA. It catalyses the reaction N(6)-carboxybiotinyl-L-lysyl-[protein] + propanoyl-CoA = methylmalonyl-CoA + N(6)-biotinyl-L-lysyl-[protein]. The protein operates within lipid metabolism; mycolic acid biosynthesis. Functionally, component of a biotin-dependent acyl-CoA carboxylase complex. This subunit transfers the CO2 from carboxybiotin to the CoA ester substrate. When associated with the alpha3 subunit AccA3, is involved in the carboxylation of acetyl-CoA and propionyl-CoA. The polypeptide is Biotin-dependent acetyl-/propionyl-coenzyme A carboxylase beta5 subunit (accD5) (Mycobacterium leprae (strain TN)).